The sequence spans 107 residues: U1-lycotoxin-Ls1b (107 aa).

Residues 1–20 (MMKVLVVVALLVTLISYSSS) form the signal peptide. Residues 21-41 (EGIDDLEADELLSLMADEQTR) constitute a propeptide that is removed on maturation. Intrachain disulfides connect cysteine 44–cysteine 59, cysteine 51–cysteine 68, cysteine 58–cysteine 86, and cysteine 70–cysteine 84.

Belongs to the neurotoxin 19 (CSTX) family. 04 (U1-Lctx) subfamily. Expressed by the venom gland.

It localises to the secreted. This chain is U1-lycotoxin-Ls1b, found in Lycosa singoriensis (Wolf spider).